The chain runs to 228 residues: Ribose-5-phosphate isomerase A (228 aa).

Substrate is bound by residues 27-30 (TGTT), 86-89 (DGAD), and 100-103 (KGGG). E109 serves as the catalytic Proton acceptor. K127 is a binding site for substrate.

This sequence belongs to the ribose 5-phosphate isomerase family. In terms of assembly, homodimer.

It catalyses the reaction aldehydo-D-ribose 5-phosphate = D-ribulose 5-phosphate. It functions in the pathway carbohydrate degradation; pentose phosphate pathway; D-ribose 5-phosphate from D-ribulose 5-phosphate (non-oxidative stage): step 1/1. Its function is as follows. Catalyzes the reversible conversion of ribose-5-phosphate to ribulose 5-phosphate. The protein is Ribose-5-phosphate isomerase A of Borrelia hermsii (strain HS1 / DAH).